Here is a 338-residue protein sequence, read N- to C-terminus: 5-dehydro-2-deoxygluconokinase (338 aa).

It belongs to the carbohydrate kinase PfkB family.

It carries out the reaction 5-dehydro-2-deoxy-D-gluconate + ATP = 6-phospho-5-dehydro-2-deoxy-D-gluconate + ADP + H(+). Its pathway is polyol metabolism; myo-inositol degradation into acetyl-CoA; acetyl-CoA from myo-inositol: step 5/7. Catalyzes the phosphorylation of 5-dehydro-2-deoxy-D-gluconate (2-deoxy-5-keto-D-gluconate or DKG) to 6-phospho-5-dehydro-2-deoxy-D-gluconate (DKGP). The chain is 5-dehydro-2-deoxygluconokinase from Mesomycoplasma hyopneumoniae (strain 232) (Mycoplasma hyopneumoniae).